The following is a 96-amino-acid chain: Co-chaperonin GroES (96 aa).

Belongs to the GroES chaperonin family. Heptamer of 7 subunits arranged in a ring. Interacts with the chaperonin GroEL.

Its subcellular location is the cytoplasm. Together with the chaperonin GroEL, plays an essential role in assisting protein folding. The GroEL-GroES system forms a nano-cage that allows encapsulation of the non-native substrate proteins and provides a physical environment optimized to promote and accelerate protein folding. GroES binds to the apical surface of the GroEL ring, thereby capping the opening of the GroEL channel. This is Co-chaperonin GroES from Colwellia maris.